An 885-amino-acid polypeptide reads, in one-letter code: DNA replication licensing factor REC (885 aa).

Residues 36 to 76 (RVIPAGGNRQPNQGEPGAPDAPSVPPATRQPRGWSRTAGKR) are disordered. The segment at 281-308 (CSRCQMEIAMRQRGTFQPRPYQCKRSEC) adopts a C4-type zinc-finger fold. One can recognise an MCM domain in the interval 430–627 (SFKLLVQSIA…ERDMSLTAHV (198 aa)). 473 to 480 (GDPGIGKT) is an ATP binding site. Polar residues predominate over residues 796-805 (SLKEGSSRQG). Positions 796-818 (SLKEGSSRQGTRGGGGAGGGAGK) are disordered. Positions 806–817 (TRGGGGAGGGAG) are enriched in gly residues.

This sequence belongs to the MCM family.

The protein localises to the nucleus. Its function is as follows. Required for meiotic DNA recombination in females. Probably not involved in DNA repair and recombination in somatic cells. This chain is DNA replication licensing factor REC (rec), found in Drosophila melanogaster (Fruit fly).